The primary structure comprises 445 residues: uncharacterized protein (445 aa).

This is an uncharacterized protein from Xanthomonas euvesicatoria.